A 154-amino-acid chain; its full sequence is Lipoprotein signal peptidase (154 aa).

The next 2 membrane-spanning stretches (helical) occupy residues 55 to 75 and 84 to 104; these read GHMW…IYIM and LFSI…IDRV. Catalysis depends on residues Asp-111 and Asp-129. A helical transmembrane segment spans residues 124–144; it reads IFNVADAALSVGVVLMLVYVF.

It belongs to the peptidase A8 family.

The protein resides in the cell membrane. It carries out the reaction Release of signal peptides from bacterial membrane prolipoproteins. Hydrolyzes -Xaa-Yaa-Zaa-|-(S,diacylglyceryl)Cys-, in which Xaa is hydrophobic (preferably Leu), and Yaa (Ala or Ser) and Zaa (Gly or Ala) have small, neutral side chains.. It participates in protein modification; lipoprotein biosynthesis (signal peptide cleavage). Functionally, this protein specifically catalyzes the removal of signal peptides from prolipoproteins. This chain is Lipoprotein signal peptidase, found in Listeria monocytogenes serotype 4b (strain CLIP80459).